Here is a 298-residue protein sequence, read N- to C-terminus: Bifunctional protein FolD (298 aa).

NADP(+)-binding positions include 166–168 (GRS), Ser-191, and Ile-232.

It belongs to the tetrahydrofolate dehydrogenase/cyclohydrolase family. In terms of assembly, homodimer.

It catalyses the reaction (6R)-5,10-methylene-5,6,7,8-tetrahydrofolate + NADP(+) = (6R)-5,10-methenyltetrahydrofolate + NADPH. It carries out the reaction (6R)-5,10-methenyltetrahydrofolate + H2O = (6R)-10-formyltetrahydrofolate + H(+). It functions in the pathway one-carbon metabolism; tetrahydrofolate interconversion. Its function is as follows. Catalyzes the oxidation of 5,10-methylenetetrahydrofolate to 5,10-methenyltetrahydrofolate and then the hydrolysis of 5,10-methenyltetrahydrofolate to 10-formyltetrahydrofolate. The sequence is that of Bifunctional protein FolD from Maricaulis maris (strain MCS10) (Caulobacter maris).